The following is a 462-amino-acid chain: MQEGKISQIIGPVVDVDFPEGQLPSILDALTVTRQDGSKLVLETQQHLGEERVRTIAMEGTDGLVRGMSAVNTGKPIQVPVGGEVLGRMLNVVGDPIDGKGPVPAKKTYSIHRAAPKFDELSTKTEMFETGIKVIDLLEPYSRGGKTGLFGGAGVGKTVLIMELINNIAKQQSGYSVFAGVGERTREGNDLWHEMMESGVIDKTALVFGQMNEPPGARARVALTGLSIAEYFREEEGRDVLLFIDNIFRFTQAGSEVSALLGRMPSAVGYQPTLSTEMGELQDRITSTKKGSVTSVQAIYVPADDLTDPAPATAFTHLDATTVLSRQIAELGIYPAVDPLDSTSRILDPNIVGDDHYNTAQAVKQILQRYKDLQDIIAILGMDELSDEDKLVVARARKVQRFLSQPFFVAEAFTGLAGKYVKLEDTIKGFKEIIDGRHDNLPEAAFYLVGTIEEAVAKAKTL.

151-158 is an ATP binding site; sequence GGAGVGKT.

Belongs to the ATPase alpha/beta chains family. As to quaternary structure, F-type ATPases have 2 components, CF(1) - the catalytic core - and CF(0) - the membrane proton channel. CF(1) has five subunits: alpha(3), beta(3), gamma(1), delta(1), epsilon(1). CF(0) has three main subunits: a(1), b(2) and c(9-12). The alpha and beta chains form an alternating ring which encloses part of the gamma chain. CF(1) is attached to CF(0) by a central stalk formed by the gamma and epsilon chains, while a peripheral stalk is formed by the delta and b chains.

The protein localises to the cell inner membrane. The catalysed reaction is ATP + H2O + 4 H(+)(in) = ADP + phosphate + 5 H(+)(out). In terms of biological role, produces ATP from ADP in the presence of a proton gradient across the membrane. The catalytic sites are hosted primarily by the beta subunits. This is ATP synthase subunit beta 2 from Chlorobaculum tepidum (strain ATCC 49652 / DSM 12025 / NBRC 103806 / TLS) (Chlorobium tepidum).